A 445-amino-acid polypeptide reads, in one-letter code: rRNA methyltransferase 3B, mitochondrial (445 aa).

The transit peptide at 1–37 (MATRIASMRFRCALFQSALTLGRNEVNIKRYVRRRRA) directs the protein to the mitochondrion. Disordered stretches follow at residues 52-90 (EGVI…SQPV) and 311-334 (HSTT…SDYG). Composition is skewed to polar residues over residues 54–70 (VISQ…NDIT), 78–90 (IENP…SQPV), and 311–324 (HSTT…NTTP). 3 residues coordinate S-adenosyl-L-methionine: G387, I411, and L420.

The protein belongs to the class IV-like SAM-binding methyltransferase superfamily. RNA methyltransferase TrmH family.

The protein resides in the mitochondrion. The enzyme catalyses a uridine in rRNA + S-adenosyl-L-methionine = a 2'-O-methyluridine in rRNA + S-adenosyl-L-homocysteine + H(+). Functionally, S-adenosyl-L-methionine-dependent 2'-O-ribose methyltransferase that catalyzes the formation of 2'-O-methylguanosine at position 1485 (Gm1485) in the mitochondrial large subunit ribosomal RNA (mtLSU rRNA), a conserved modification in the peptidyl transferase domain of the mtLSU rRNA. Also required for formation of 2'-O-methyluridine at position 1484 (Um1484) mediated by MRM2. This Danio rerio (Zebrafish) protein is rRNA methyltransferase 3B, mitochondrial.